Consider the following 462-residue polypeptide: L-seryl-tRNA(Sec) selenium transferase (462 aa).

The residue at position 295 (K295) is an N6-(pyridoxal phosphate)lysine.

This sequence belongs to the SelA family. Homodecamer; pentamer of dimers. Binds only one seryl-tRNA(Sec) per dimer. Requires pyridoxal 5'-phosphate as cofactor.

It localises to the cytoplasm. It catalyses the reaction L-seryl-tRNA(Sec) + selenophosphate + H(+) = L-selenocysteinyl-tRNA(Sec) + phosphate. Its pathway is aminoacyl-tRNA biosynthesis; selenocysteinyl-tRNA(Sec) biosynthesis; selenocysteinyl-tRNA(Sec) from L-seryl-tRNA(Sec) (bacterial route): step 1/1. In terms of biological role, converts seryl-tRNA(Sec) to selenocysteinyl-tRNA(Sec) required for selenoprotein biosynthesis. This chain is L-seryl-tRNA(Sec) selenium transferase, found in Klebsiella pneumoniae (strain 342).